Consider the following 1977-residue polypeptide: Echinoderm microtubule-associated protein-like 5 (1977 aa).

WD repeat units follow at residues 59 to 100 (GHSD…TVSV), 104 to 145 (VHTH…MLSM), 148 to 187 (GHTD…LTPK), 195 to 233 (GDLQ…RTIQ), 235 to 273 (AHTA…TVID), 280 to 321 (GYKG…LIMQ), 323 to 362 (HCEG…LIAR), 406 to 445 (DRKE…KKVG), 449 to 488 (GSLS…EVTS), and 561 to 601 (GHSA…KLKD). The segment at 609–629 (ESLAESNSDESDSDLSDVPEL) is disordered. Residues 615 to 629 (NSDESDSDLSDVPEL) show a composition bias toward acidic residues. 9 WD repeats span residues 725-766 (GHDD…PLSI), 770-811 (YHQY…KLSV), 814-853 (GSKD…LIGK), 861-900 (GKND…KTVK), 901-940 (AHDG…KTYA), 996-1035 (HMEG…CMLA), 1038-1077 (KLKK…DLVS), 1080-1120 (HRKD…RVGV), and 1236-1276 (AHST…HREK). 2 disordered regions span residues 1276-1297 (KKYC…YDSD) and 1323-1363 (PHLQ…NVGK). The span at 1281–1294 (SEESDIDSEEDGGY) shows a compositional bias: acidic residues. Basic and acidic residues predominate over residues 1326–1337 (QQKEPSVDERQG). WD repeat units lie at residues 1420-1471 (EHND…TLSI), 1475-1516 (SHSK…KIAS), 1519-1558 (GHNQ…LLSK), 1568-1606 (ARMQ…RVVA), 1608-1654 (AHNG…RAFR), 1699-1739 (GHVD…MLNK), 1741-1782 (NLGH…GKKR), 1783-1822 (DRRC…TLNR), 1895-1934 (AEKA…KFAK), and 1940-1977 (GHSP…HMPH).

This sequence belongs to the WD repeat EMAP family.

It is found in the cytoplasm. The protein localises to the cytoskeleton. May modify the assembly dynamics of microtubules, such that microtubules are slightly longer, but more dynamic. The chain is Echinoderm microtubule-associated protein-like 5 (Eml5) from Mus musculus (Mouse).